The primary structure comprises 893 residues: Translation initiation factor IF-2 (893 aa).

Disordered stretches follow at residues 51 to 203 (KEHG…AEAE) and 216 to 300 (EENE…SMQH). Basic and acidic residues-rich tracts occupy residues 102-203 (ALEE…AEAE), 216-238 (EENE…DADY), and 245-261 (HARE…EQQP). A tr-type G domain is found at 392–561 (GRAPVVTIMG…LLQSEVLELT (170 aa)). The interval 401 to 408 (GHVDHGKT) is G1. 401-408 (GHVDHGKT) is a GTP binding site. The G2 stretch occupies residues 426-430 (GITQH). Residues 447–450 (DTPG) are G3. GTP is bound by residues 447 to 451 (DTPGH) and 501 to 504 (NKID). The G4 stretch occupies residues 501-504 (NKID). The G5 stretch occupies residues 537–539 (SAK).

Belongs to the TRAFAC class translation factor GTPase superfamily. Classic translation factor GTPase family. IF-2 subfamily.

The protein resides in the cytoplasm. Functionally, one of the essential components for the initiation of protein synthesis. Protects formylmethionyl-tRNA from spontaneous hydrolysis and promotes its binding to the 30S ribosomal subunits. Also involved in the hydrolysis of GTP during the formation of the 70S ribosomal complex. This is Translation initiation factor IF-2 from Aliivibrio fischeri (strain MJ11) (Vibrio fischeri).